A 325-amino-acid chain; its full sequence is MSFTGSLALAGIGGLVYKFGGGQSYEKLPYVNIPFNQYLDKVYKKHFSKVMSRTRYVLMNFFKDAFTGGAFMYPFKGFLEFNTNKSSYSTTMLGILSSYLIMFALVSFVYWATITPMYTAFLIVLGPIGLFIAIFHSFLQANVFTLLFMRLSHFNNHLVEVCLEKNGLEENLSEVKPIKYYAPINSIYFWAYYFPFKLVKYMLGLSVLFVLLVISFFPLIGPILFHILISPFITQIYFTKVLRLQNFDNIQRRENIYLHAGQYASFGFLAGLIESVPILAGFAISTNTIGSVLFNLDHPMVPENLVETQAEIEAAPQDINQQPNQ.

Over 1–91 (MSFTGSLALA…NTNKSSYSTT (91 aa)) the chain is Cytoplasmic. Residues 92–112 (MLGILSSYLIMFALVSFVYWA) form a helical membrane-spanning segment. Residues 113–118 (TITPMY) are Extracellular-facing. A helical membrane pass occupies residues 119 to 139 (TAFLIVLGPIGLFIAIFHSFL). Topologically, residues 140 to 208 (QANVFTLLFM…VKYMLGLSVL (69 aa)) are cytoplasmic. The helical transmembrane segment at 209-229 (FVLLVISFFPLIGPILFHILI) threads the bilayer. At 230–263 (SPFITQIYFTKVLRLQNFDNIQRRENIYLHAGQY) the chain is on the extracellular side. Residues 264-284 (ASFGFLAGLIESVPILAGFAI) form a helical membrane-spanning segment. Residues 285-325 (STNTIGSVLFNLDHPMVPENLVETQAEIEAAPQDINQQPNQ) lie on the Cytoplasmic side of the membrane.

This sequence belongs to the LDS family.

It is found in the prospore membrane. The protein resides in the lipid droplet. Its subcellular location is the spore wall. Involved in spore wall assembly. The protein is Outer spore wall protein LDS1 of Saccharomyces cerevisiae (strain ATCC 204508 / S288c) (Baker's yeast).